The sequence spans 526 residues: Peptide chain release factor 3 (526 aa).

Residues Asp9–Gln277 form the tr-type G domain. Residues Ser18–Thr25, Asp86–His90, and Asn140–Asp143 each bind GTP.

The protein belongs to the TRAFAC class translation factor GTPase superfamily. Classic translation factor GTPase family. PrfC subfamily.

The protein localises to the cytoplasm. Its function is as follows. Increases the formation of ribosomal termination complexes and stimulates activities of RF-1 and RF-2. It binds guanine nucleotides and has strong preference for UGA stop codons. It may interact directly with the ribosome. The stimulation of RF-1 and RF-2 is significantly reduced by GTP and GDP, but not by GMP. This chain is Peptide chain release factor 3, found in Shewanella loihica (strain ATCC BAA-1088 / PV-4).